Here is a 105-residue protein sequence, read N- to C-terminus: UPF0060 membrane protein Rmet_4032 (105 aa).

4 helical membrane passes run 4-24 (VGLY…PYLW), 28-48 (GASP…AWLL), 60-80 (AAYG…VDGV), and 82-102 (PSPW…IIVF).

Belongs to the UPF0060 family.

The protein resides in the cell inner membrane. The polypeptide is UPF0060 membrane protein Rmet_4032 (Cupriavidus metallidurans (strain ATCC 43123 / DSM 2839 / NBRC 102507 / CH34) (Ralstonia metallidurans)).